The primary structure comprises 86 residues: Small ribosomal subunit protein bS20 (86 aa).

A disordered region spans residues 1 to 21 (MANTKSAIKAARKSLRLHDRN).

It belongs to the bacterial ribosomal protein bS20 family.

Its function is as follows. Binds directly to 16S ribosomal RNA. This chain is Small ribosomal subunit protein bS20, found in Opitutus terrae (strain DSM 11246 / JCM 15787 / PB90-1).